We begin with the raw amino-acid sequence, 319 residues long: Protein HEXIM1 (319 aa).

Positions methionine 1–arginine 22 are enriched in basic and acidic residues. Disordered regions lie at residues methionine 1–arginine 111, leucine 157–aspartate 223, asparagine 262–glutamate 286, and asparagine 299–serine 319. Polar residues predominate over residues serine 24–glutamine 35. Positions proline 49–threonine 61 are enriched in basic and acidic residues. Over residues glycine 97 to arginine 111 the composition is skewed to basic residues. The segment covering threonine 185–glycine 202 has biased composition (acidic residues). Positions glycine 203–glycine 216 are enriched in gly residues. Residues serine 240–proline 306 adopt a coiled-coil conformation. The span at proline 306–serine 319 shows a compositional bias: polar residues.

The protein belongs to the HEXIM family. As to quaternary structure, homooligomer and heterooligomer. Core component of the 7SK RNP complex.

Its subcellular location is the nucleus. It is found in the cytoplasm. Functionally, transcriptional regulator which functions as a general RNA polymerase II transcription inhibitor. Core component of the 7SK RNP complex: in cooperation with 7SK snRNA sequesters P-TEFb in a large inactive 7SK snRNP complex preventing RNA polymerase II phosphorylation and subsequent transcriptional elongation. Plays a role in the regulation of DNA virus-mediated innate immune response by assembling into the HDP-RNP complex, a complex that serves as a platform for IRF3 phosphorylation and subsequent innate immune response activation through the cGAS-STING pathway. This Danio rerio (Zebrafish) protein is Protein HEXIM1 (hexim1).